Here is a 120-residue protein sequence, read N- to C-terminus: UPF0091 protein PH1455 (120 aa).

The protein belongs to the UPF0091 family.

This Pyrococcus horikoshii (strain ATCC 700860 / DSM 12428 / JCM 9974 / NBRC 100139 / OT-3) protein is UPF0091 protein PH1455.